The primary structure comprises 596 residues: Actin-histidine N-methyltransferase (596 aa).

Residues methionine 1–proline 22 are disordered. Residues glutamine 10–valine 20 show a composition bias toward polar residues. S-adenosyl-L-methionine is bound by residues arginine 75, glutamate 104 to phenylalanine 106, arginine 254, aspartate 275 to histidine 279, and serine 325 to phenylalanine 327. The SET domain maps to glutamate 94–glycine 314. The disordered stretch occupies residues glycine 551–leucine 596. Positions serine 571 to glutamate 584 are enriched in acidic residues.

It belongs to the class V-like SAM-binding methyltransferase superfamily. SETD3 actin-histidine methyltransferase family. In terms of assembly, interacts with MYOD1. In terms of processing, phosphorylated by GSK3B, which is required for recognition by the SCF(FBXW7) complex and subsequent degradation. Ubiquitinated by the SCF(FBXW7) complex following phosphorylation by GSK3B, leading to its degradation by the proteasome.

Its subcellular location is the cytoplasm. It is found in the nucleus. The catalysed reaction is L-histidyl-[protein] + S-adenosyl-L-methionine = N(tele)-methyl-L-histidyl-[protein] + S-adenosyl-L-homocysteine + H(+). Protein-histidine N-methyltransferase that specifically mediates 3-methylhistidine (tele-methylhistidine) methylation of actin at 'His-73'. Histidine methylation of actin is required for smooth muscle contraction of the laboring uterus during delivery. Does not have protein-lysine N-methyltransferase activity and probably only catalyzes histidine methylation of actin. In Rattus norvegicus (Rat), this protein is Actin-histidine N-methyltransferase.